Reading from the N-terminus, the 276-residue chain is 2-dehydro-3-deoxyphosphooctonate aldolase (276 aa).

The protein belongs to the KdsA family.

It localises to the cytoplasm. The enzyme catalyses D-arabinose 5-phosphate + phosphoenolpyruvate + H2O = 3-deoxy-alpha-D-manno-2-octulosonate-8-phosphate + phosphate. The protein operates within carbohydrate biosynthesis; 3-deoxy-D-manno-octulosonate biosynthesis; 3-deoxy-D-manno-octulosonate from D-ribulose 5-phosphate: step 2/3. Its pathway is bacterial outer membrane biogenesis; lipopolysaccharide biosynthesis. This chain is 2-dehydro-3-deoxyphosphooctonate aldolase, found in Chelativorans sp. (strain BNC1).